Consider the following 542-residue polypeptide: MIIMADLDRKLIEILDILSKSKEPVGAKIIAKELNKRGYKIGERAVRYHLKLLDGMKLTKKVGYAGRVITERGLEELEKANISYRLGSIYSNILEKTISANYRFGYVVINRCQVYADFNDVLKIIKSVYESGLAVGDRVGIIDREKFVEINTLCSLNFDNILLQNGIFPLHVCAGVVKYEDGKPVEFKEIIDYKSTSIDPLRAFIEKKETDVMGIIENGEGYLPANFRYFGVEFLERFETILEIDELKCIISYGTENVLGLDVGDDKVGVALIGGLTPIAPFVENNYCVEICPMSSIVRLESLHKLKKNPRDIVTKKANIRIKTALSKMFNAMAKVTYDIDEADGDVIVNTAFIDKKYLDEAFDILKEAYKKGLGISDRFGIVEENDRIKIQTICAVTLDGIFLRNSVPLIPKYGGILEITEDKERFIDIIGYDGSSLDPHEVFFNFVDCEKTFLAGFREVHRVAREKLEEVLKKLNWNGIKAIGEPNNELYGIGVNKDMCGVVTMGGINPLVLLKENEIPIELKAMHEVVRFSDLKSYKEI.

Positions 12 to 77 (IEILDILSKS…VITERGLEEL (66 aa)) are winged helix-turn-helix. 2 NRD regions span residues 85–320 (RLGS…KANI) and 321–542 (RIKT…YKEI).

Belongs to the NrpR family. Homodimer.

Under nitrogen limitation, binding of the intracellular nitrogen metabolite 2-oxoglutarate to NrpR decreases the binding affinity of NrpR to DNA, leading to initiation of transcription. Its function is as follows. Transcriptional repressor of nitrogen fixation and assimilation genes. Binds to two tandem operators in the glnA and nif promoters, thereby blocking transcription of the genes. This chain is Global nitrogen regulator NrpR, found in Methanocaldococcus jannaschii (strain ATCC 43067 / DSM 2661 / JAL-1 / JCM 10045 / NBRC 100440) (Methanococcus jannaschii).